The sequence spans 739 residues: DNA ligase (739 aa).

Residues 34–38 (DADYD), 83–84 (SL), and Glu117 contribute to the NAD(+) site. Lys119 (N6-AMP-lysine intermediate) is an active-site residue. Positions 140, 175, 291, and 315 each coordinate NAD(+). 4 residues coordinate Zn(2+): Cys420, Cys423, Cys438, and Cys444. The region spanning 660-739 (ADDSPVAGKT…DGWLDLIGQA (80 aa)) is the BRCT domain.

Belongs to the NAD-dependent DNA ligase family. LigA subfamily. It depends on Mg(2+) as a cofactor. The cofactor is Mn(2+).

The catalysed reaction is NAD(+) + (deoxyribonucleotide)n-3'-hydroxyl + 5'-phospho-(deoxyribonucleotide)m = (deoxyribonucleotide)n+m + AMP + beta-nicotinamide D-nucleotide.. Its function is as follows. DNA ligase that catalyzes the formation of phosphodiester linkages between 5'-phosphoryl and 3'-hydroxyl groups in double-stranded DNA using NAD as a coenzyme and as the energy source for the reaction. It is essential for DNA replication and repair of damaged DNA. This chain is DNA ligase, found in Ruegeria sp. (strain TM1040) (Silicibacter sp.).